We begin with the raw amino-acid sequence, 280 residues long: Putative pyruvate, phosphate dikinase regulatory protein (280 aa).

Position 154 to 161 (154 to 161 (GVSRTSKT)) interacts with ADP.

This sequence belongs to the pyruvate, phosphate/water dikinase regulatory protein family. PDRP subfamily.

It carries out the reaction N(tele)-phospho-L-histidyl/L-threonyl-[pyruvate, phosphate dikinase] + ADP = N(tele)-phospho-L-histidyl/O-phospho-L-threonyl-[pyruvate, phosphate dikinase] + AMP + H(+). It catalyses the reaction N(tele)-phospho-L-histidyl/O-phospho-L-threonyl-[pyruvate, phosphate dikinase] + phosphate + H(+) = N(tele)-phospho-L-histidyl/L-threonyl-[pyruvate, phosphate dikinase] + diphosphate. Bifunctional serine/threonine kinase and phosphorylase involved in the regulation of the pyruvate, phosphate dikinase (PPDK) by catalyzing its phosphorylation/dephosphorylation. The sequence is that of Putative pyruvate, phosphate dikinase regulatory protein from Nitrobacter hamburgensis (strain DSM 10229 / NCIMB 13809 / X14).